Consider the following 553-residue polypeptide: Urocanate hydratase (553 aa).

Residues 45–46, Gln123, 169–171, Asp189, Arg194, 235–236, 256–260, 266–267, Tyr315, and Gly485 each bind NAD(+); these read GG, GMG, NA, QTSAH, and YV.

It belongs to the urocanase family. The cofactor is NAD(+).

It is found in the cytoplasm. It carries out the reaction 4-imidazolone-5-propanoate = trans-urocanate + H2O. It functions in the pathway amino-acid degradation; L-histidine degradation into L-glutamate; N-formimidoyl-L-glutamate from L-histidine: step 2/3. Functionally, catalyzes the conversion of urocanate to 4-imidazolone-5-propionate. In Staphylococcus saprophyticus subsp. saprophyticus (strain ATCC 15305 / DSM 20229 / NCIMB 8711 / NCTC 7292 / S-41), this protein is Urocanate hydratase.